A 1230-amino-acid polypeptide reads, in one-letter code: MSSEDELGSIGTVFPGSPIDKSIGSILPQFDEEVETLLEDSFTWNIPDWNELTNPKYNSPRFRIGDFEWDILLFPQGNHNKGVAVYLEPHPEEKLDETTGEMVPVDPDWYCCAQFAIGISRPGNGDTINLINKSHHRFNALDTDWGFANLIDLNNLKHPSKGRPLSFLNEGTLNITAYVRILKDPTGVLWHNFLNYDSKKVTGYVGFRNQGATCYLNSLLQSYFFTKYFRKLVYEIPTEHESPNNSVPLALQRAFYQLQVSDIPLDTLELTRSFGWDTAESFTQHDVQELNRILMDRLENNMKGTPVEGKLNEIFVGKMKSYIKCINVDYESARVEDFWDLQLNVKNFKNLQESFDNYIEMELMNGENQYAAQDYGLQDAQKGVIFESFPPVLHLQLKRFEYDFNYDQMVKVNDKYEFPETIDLSPFVDKDVLKKTLDSENKDKNPYVYNLHGVLVHSGDISTGHYYTLIKPGVEDQWYRFDDERVWRVTKKQVFQENFGCDRLPDEKVRTMTRGEYQNYIIQRHTSAYMLVYIRQEQEEDLLRPVLESDVPKHVITRVREEIKERETKEKEIREAHLYVTLRLHSIKEFIHYEGFDYFAHDGFRLFAEELNDSGLQQINLKVLRTTKLSDIFASIKETMNIPQERDVKYWKMDYRRNSTLRLTQPINFESVNITLQEALKKEKKRTMQTQYGEEGVASTEEDDKALLETVSFLDLFIEEPYLELQFLNKLKEASLISKAQLDDELISTIRTNLPELTKGGIEPVFATDNKSNLLFVKSYDPHTQKLLGFGHFAVNQLQQLSDISAIIEDSISSNEKLTFYEEVQPGTINEIYMKETIYDADIDTGDIVSFEVPGAVLPDTFPVYATIKDFYSYLRYRVKLKFSKFDGSSEEYGVSNEIPESFEFWISAYAPYDDLARMVSKYAHVKPEYLKIIALYSNGRFVLKSTSLLNDYLLKDFNCDQIPPFAFEVLSVPLKELERLRPIKLYWLKNSYIHYQCFEFEVANDYTESQFLEKVQHKIGFTDEEKENILLWTNTNFQFQGLLSDQNTFKDVSKHSLLFGRILPEESKLFKELNRLENVQTSSLEDFMDDENATDRPMDDEQDLGMAIEHSEDMKGRIVVVQQYFKDLENRHGISFLFNLIPDETFPKTKDRLHAKFGLGQKEFSKIKLSIGYSTEEGTVFRSLQGFSDEELDKVILYDIMSNLDYIYMDHPDRLRSHSSYDRPMIIKN.

In terms of domain architecture, MATH spans 39–179 (EDSFTWNIPD…EGTLNITAYV (141 aa)). The region spanning 205-536 (VGFRNQGATC…SAYMLVYIRQ (332 aa)) is the USP domain. C214 (nucleophile) is an active-site residue. The active-site Proton acceptor is the H465.

The protein belongs to the peptidase C19 family. As to quaternary structure, interacts with PEX6; promoting association with the PEX1-PEX6 ATPase complex.

It localises to the cytoplasm. Its subcellular location is the cytosol. It is found in the peroxisome. The catalysed reaction is Thiol-dependent hydrolysis of ester, thioester, amide, peptide and isopeptide bonds formed by the C-terminal Gly of ubiquitin (a 76-residue protein attached to proteins as an intracellular targeting signal).. Its function is as follows. Deubiquitinase involved in peroxisome import by mediating deubiquitination of the peroxisomal import receptor PEX5. Catalyzes deubiquitination of both monoubiquitiated and polyubiquitinated forms of PEX5 following its retrotranslocation into the cytosol, resetting PEX5 for a subsequent import cycle. The chain is Ubiquitin carboxyl-terminal hydrolase 15 from Saccharomyces cerevisiae (strain ATCC 204508 / S288c) (Baker's yeast).